Here is a 643-residue protein sequence, read N- to C-terminus: Aspartic protease 3 (643 aa).

Residues 1–31 (MEGRTTAGRATPAGFWLFSCCLASVLWSANA) form the signal peptide. The span at 87 to 99 (APEVSGAAGASAS) shows a compositional bias: low complexity. Positions 87–116 (APEVSGAAGASASKTSEKPIRPYHTGPSSR) are disordered. In terms of domain architecture, Peptidase A1 spans 281 to 600 (YVGVIGIGTP…GTRPSLVGIA (320 aa)). Active-site residues include aspartate 299 and aspartate 490.

The protein belongs to the peptidase A1 family.

It is found in the endomembrane system. Its activity is regulated as follows. Inhibited by 49c, a hydroxyethylamine scaffold-based compound. In terms of biological role, required for the processing-mediated maturation of a subset of microneme proteins, such as MIC6, and rhoptry proteins, such as ROP1. By regulating microneme and rhoptry processing, plays an essential role in the lysis of the host cell membrane during egress and in rhoptry content discharge, which is required for invasion of host cells. In Toxoplasma gondii, this protein is Aspartic protease 3.